The chain runs to 1204 residues: E3 ubiquitin-protein ligase DZIP3 (1204 aa).

2 disordered regions span residues 1–22 and 640–681; these read MDSLAEEFFVSGNPDVEEQTKE and SIPS…EQVS. Positions 649-658 are enriched in basic and acidic residues; the sequence is SVKDLQEVKS. Residues 659-668 are compositionally biased toward basic residues; the sequence is KTKKKKRTKS. 2 coiled-coil regions span residues 746–861 and 906–941; these read KETE…TSRA and QLKAAVDSWNAIVADVRNKIAFLRTQYNEQINKVKQ. Residues 1088 to 1098 are compositionally biased toward basic and acidic residues; sequence PKKSESEEKSA. A disordered region spans residues 1088 to 1141; that stretch reads PKKSESEEKSAQDGNNASPSHTASQPNAPQDPKSAQGSATWEGDKDMDNEEEEE. A compositionally biased stretch (polar residues) spans 1099 to 1126; sequence QDGNNASPSHTASQPNAPQDPKSAQGSA. Residues 1132–1141 are compositionally biased toward acidic residues; it reads KDMDNEEEEE. An RING-type; atypical zinc finger spans residues 1144–1184; it reads CVICHENLSPENLSVLPCAHKFHSQCIRPWLMQQGTCPTCR.

As to quaternary structure, probably interacts with DAZL.

Its subcellular location is the cytoplasm. The enzyme catalyses S-ubiquitinyl-[E2 ubiquitin-conjugating enzyme]-L-cysteine + [acceptor protein]-L-lysine = [E2 ubiquitin-conjugating enzyme]-L-cysteine + N(6)-ubiquitinyl-[acceptor protein]-L-lysine.. It functions in the pathway protein modification; protein ubiquitination. E3 Ubiquitin ligase proteins mediate ubiquitination and subsequent proteasomal degradation of target proteins. E3 ubiquitin ligases accept ubiquitin from an E2 ubiquitin-conjugating enzyme in the form of a thioester and then directly transfers the ubiquitin to targeted substrates. Able to specifically bind RNA. The sequence is that of E3 ubiquitin-protein ligase DZIP3 (Dzip3) from Mus musculus (Mouse).